The primary structure comprises 294 residues: Cytidine deaminase (294 aa).

CMP/dCMP-type deaminase domains lie at 48–168 (DDDA…FGPK) and 187–294 (ALTD…RITF). Substrate is bound at residue 89–91 (NME). Residue H102 coordinates Zn(2+). E104 (proton donor) is an active-site residue. The Zn(2+) site is built by C129 and C132.

The protein belongs to the cytidine and deoxycytidylate deaminase family. Homodimer. The cofactor is Zn(2+).

It carries out the reaction cytidine + H2O + H(+) = uridine + NH4(+). The catalysed reaction is 2'-deoxycytidine + H2O + H(+) = 2'-deoxyuridine + NH4(+). Its function is as follows. This enzyme scavenges exogenous and endogenous cytidine and 2'-deoxycytidine for UMP synthesis. This Serratia proteamaculans (strain 568) protein is Cytidine deaminase.